Reading from the N-terminus, the 516-residue chain is Leucine-rich repeat transmembrane neuronal protein 2 (516 aa).

Positions Met1 to Ala33 are cleaved as a signal peptide. Positions Cys34–Lys61 constitute an LRRNT domain. At Cys34 to Arg422 the chain is on the extracellular side. A glycan (N-linked (GlcNAc...) asparagine) is linked at Asn57. LRR repeat units follow at residues Ser63–Ser83, Gln86–Gly107, Lys110–Gln131, Asn134–Gly155, Lys158–Asp179, Ser182–Gly203, Lys206–Arg227, Ser230–Thr251, Thr254–Thr275, and Asn278–Ser299. N-linked (GlcNAc...) asparagine glycosylation occurs at Asn126. N-linked (GlcNAc...) asparagine glycosylation occurs at Asn243. In terms of domain architecture, LRRCT spans Asn311–Asn362. Asn362 is a glycosylation site (N-linked (GlcNAc...) asparagine). A helical transmembrane segment spans residues Val423 to Ile443. Topologically, residues Ser444 to Val516 are cytoplasmic. The Involved in DLG4-binding signature appears at Glu513 to Val516.

It belongs to the LRRTM family. Interacts with DLG4. Interacts with neurexin NRXN1; interaction is mediated by heparan sulfate glycan modification on neurexin. In terms of tissue distribution, expressed in neuronal tissues.

It is found in the cell membrane. The protein localises to the postsynaptic cell membrane. In terms of biological role, involved in the development and maintenance of excitatory synapses in the vertebrate nervous system. Regulates surface expression of AMPA receptors and instructs the development of functional glutamate release sites. Acts as a ligand for the presynaptic receptors NRXN1-A and NRXN1-B. This chain is Leucine-rich repeat transmembrane neuronal protein 2 (LRRTM2), found in Homo sapiens (Human).